A 278-amino-acid polypeptide reads, in one-letter code: HTH-type transcriptional activator RhaS (278 aa).

Positions 174–272 constitute an HTH araC/xylS-type domain; the sequence is NQLLAWLEDH…DWSPRDIRQG (99 aa). 2 consecutive DNA-binding regions (H-T-H motif) follow at residues 191-212 and 239-262; these read ESIADKFSLSLRTLHRQLKQQT and VTDIAYRCGFGDSNHFSTLFRREF.

In terms of assembly, binds DNA as a dimer.

The protein resides in the cytoplasm. Functionally, activates expression of the rhaBAD and rhaT operons. The chain is HTH-type transcriptional activator RhaS from Citrobacter koseri (strain ATCC BAA-895 / CDC 4225-83 / SGSC4696).